A 606-amino-acid chain; its full sequence is MEQDTQHVKPLQTKTDIHAVLASNGRIIYISANSKLHLGYLQGEMIGSFLKTFLHEEDQFLVESYFYNEHHLMPCTFRFIKKDHTIVWVEAAVEIVTTRAERTEREIILKMKVLEEETGHQSLNCEKHEIEPASPESTTYITDDYERLVENLPSPLCISVKGKIVYVNSAMLSMLGAKSKDAIIGKSSYEFIEEEYHDIVKNRIIRMQKGMEVGMIEQTWKRLDGTPVHLEVKASPTVYKNQQAELLLLIDISSRKKFQTILQKSRERYQLLIQNSIDTIAVIHNGKWVFMNESGISLFEAATYEDLIGKNIYDQLHPCDHEDVKERIQNIAEQKTESEIVKQSWFTFQNRVIYTEMVCIPTTFFGEAAVQVILRDISERKQTEELMLKSEKLSIAGQLAAGIAHEIRNPLTAIKGFLQLMKPTMEGNEHYFDIVFSELSRIELILSELLMLAKPQQNAVKEYLNLKKLIGEVSALLETQANLNGIFIRTSYEKDSIYINGDQNQLKQVFINLIKNAVESMPDGGTVDIIITEDEHSVHVTVKDEGEGIPEKVLNRIGEPFLTTKEKGTGLGLMVTFNIIENHQGVIHVDSHPEKGTAFKISFPKK.

In terms of domain architecture, PAS 1 spans 3–73 (QDTQHVKPLQ…SYFYNEHHLM (71 aa)). The 40-residue stretch at 77–116 (FRFIKKDHTIVWVEAAVEIVTTRAERTEREIILKMKVLEE) folds into the PAC 1 domain. The PAS 2 domain maps to 140 to 214 (YITDDYERLV…IRMQKGMEVG (75 aa)). Positions 218-255 (QTWKRLDGTPVHLEVKASPTVYKNQQAELLLLIDISSR) constitute a PAC 2 domain. Positions 265–335 (SRERYQLLIQ…ERIQNIAEQK (71 aa)) constitute a PAS 3 domain. The 205-residue stretch at 402 to 606 (GIAHEIRNPL…TAFKISFPKK (205 aa)) folds into the Histidine kinase domain. Phosphohistidine; by autocatalysis is present on H405.

It carries out the reaction ATP + protein L-histidine = ADP + protein N-phospho-L-histidine.. Phosphorylates the sporulation-regulatory proteins spo0A and spo0F. It also autophosphorylates in the presence of ATP. The protein is Sporulation kinase A (kinA) of Bacillus subtilis (strain 168).